The primary structure comprises 572 residues: Glutamate--tRNA ligase (572 aa).

The short motif at 112 to 122 (PNPNGPPSLGN) is the 'HIGH' region element.

Belongs to the class-I aminoacyl-tRNA synthetase family. Glutamate--tRNA ligase type 2 subfamily.

The protein localises to the cytoplasm. It carries out the reaction tRNA(Glu) + L-glutamate + ATP = L-glutamyl-tRNA(Glu) + AMP + diphosphate. Functionally, catalyzes the attachment of glutamate to tRNA(Glu) in a two-step reaction: glutamate is first activated by ATP to form Glu-AMP and then transferred to the acceptor end of tRNA(Glu). This Methanocella arvoryzae (strain DSM 22066 / NBRC 105507 / MRE50) protein is Glutamate--tRNA ligase.